The following is a 161-amino-acid chain: Transcription elongation factor GreA (161 aa).

The stretch at 45–72 (NAEYHSAKEKLKLIDIQIAELNAVISKA) forms a coiled coil.

The protein belongs to the GreA/GreB family.

Its function is as follows. Necessary for efficient RNA polymerase transcription elongation past template-encoded arresting sites. The arresting sites in DNA have the property of trapping a certain fraction of elongating RNA polymerases that pass through, resulting in locked ternary complexes. Cleavage of the nascent transcript by cleavage factors such as GreA or GreB allows the resumption of elongation from the new 3'terminus. GreA releases sequences of 2 to 3 nucleotides. The sequence is that of Transcription elongation factor GreA from Aliarcobacter butzleri (strain RM4018) (Arcobacter butzleri).